Consider the following 144-residue polypeptide: Large ribosomal subunit protein uL15 (144 aa).

Positions 1–49 (MRLNTLSPAAGAKSAAKRVGRGIGSGTGKTCGRGHKGQKSRSGGGVRVG) are disordered. The segment covering 21 to 31 (RGIGSGTGKTC) has biased composition (gly residues).

It belongs to the universal ribosomal protein uL15 family. Part of the 50S ribosomal subunit.

In terms of biological role, binds to the 23S rRNA. This Shewanella halifaxensis (strain HAW-EB4) protein is Large ribosomal subunit protein uL15.